We begin with the raw amino-acid sequence, 301 residues long: Oxygen-dependent coproporphyrinogen-III oxidase (301 aa).

The tract at residues 49–58 (VMVDGAVIEK) is important for dimerization. Residue serine 93 coordinates substrate. Histidine 107 functions as the Proton donor in the catalytic mechanism. Residues 109-111 (NVR) and 259-261 (GGR) contribute to the substrate site. The tract at residues 241 to 276 (YAEFNLVIDRGTKFGLQSGGRTESILISLPPRARWG) is important for dimerization.

This sequence belongs to the aerobic coproporphyrinogen-III oxidase family. In terms of assembly, homodimer.

It is found in the cytoplasm. It catalyses the reaction coproporphyrinogen III + O2 + 2 H(+) = protoporphyrinogen IX + 2 CO2 + 2 H2O. It functions in the pathway porphyrin-containing compound metabolism; protoporphyrin-IX biosynthesis; protoporphyrinogen-IX from coproporphyrinogen-III (O2 route): step 1/1. Involved in the heme biosynthesis. Catalyzes the aerobic oxidative decarboxylation of propionate groups of rings A and B of coproporphyrinogen-III to yield the vinyl groups in protoporphyrinogen-IX. This Leishmania major protein is Oxygen-dependent coproporphyrinogen-III oxidase.